Consider the following 221-residue polypeptide: Large ribosomal subunit protein uL1 (221 aa).

It belongs to the universal ribosomal protein uL1 family. Part of the 50S ribosomal subunit.

Its function is as follows. Probably involved in E site tRNA release. Binds directly to 23S rRNA. In terms of biological role, protein L1 is also a translational repressor protein, it controls the translation of its operon by binding to its mRNA. This chain is Large ribosomal subunit protein uL1, found in Sulfolobus acidocaldarius (strain ATCC 33909 / DSM 639 / JCM 8929 / NBRC 15157 / NCIMB 11770).